Here is a 550-residue protein sequence, read N- to C-terminus: Hydroxylamine reductase (550 aa).

[2Fe-2S] cluster contacts are provided by Cys-3, Cys-6, Cys-18, and Cys-25. Positions 249, 273, 317, 405, 433, 458, 492, and 494 each coordinate hybrid [4Fe-2O-2S] cluster. Position 405 is a cysteine persulfide (Cys-405).

This sequence belongs to the HCP family. [2Fe-2S] cluster is required as a cofactor. The cofactor is hybrid [4Fe-2O-2S] cluster.

The protein resides in the cytoplasm. The catalysed reaction is A + NH4(+) + H2O = hydroxylamine + AH2 + H(+). With respect to regulation, inhibited by oxygen. Activated by cyanide except in the prolonged presence of excess cyanide, where the enzyme is inactivated. Catalyzes the reduction of hydroxylamine to form NH(3) and H(2)O. Is also able to reduce hydroxylamine analogs such as methylhydroxylamine and hydroxyquinone. Might have a role as a scavenger of potentially toxic by-products of nitrate metabolism. The sequence is that of Hydroxylamine reductase from Escherichia coli (strain K12).